A 421-amino-acid polypeptide reads, in one-letter code: EQQKYLNAKKYVKLVLVADYIMYLKYGRSLTTLRTRMYDIVNIINLIFQRMNIHVALVGLEIWSNRDKIIVQSSADVTLDLFAKWRETDLLKRKSHDNAQLLTGINFNGPTAGLAYLSGICKPMYSAGIVQDHNKVHHLVAIAMAHEMGHNLGMDHDKDTCTCGARSCVMAGTLSCEPSYLFSDCSRREHRAFLIKDMPQCILEKPLRTDVVSPPVCGNYFVEVGEECDCGSPATCRDTCCDAATCKLRQGAQCAEGLCCDQCRFKGAGTECRAAKDECDMADLCTGRSAECTDRFQRNGQPCQNNNGYCYNGTCPIMRDQCIALFGPNAAVSQDACFQFNLQGNHYGYCRKEQNTKIACEPQDVKCGRLYCFPSSPATKNPCNIHYSPNDEDKGMVLPGTKCADGKACSNGRCVDVTTPY.

Residues 10-206 form the Peptidase M12B domain; that stretch reads KYVKLVLVAD…DMPQCILEKP (197 aa). Disulfide bonds link cysteine 121-cysteine 201, cysteine 161-cysteine 185, and cysteine 163-cysteine 168. Histidine 146 is a Zn(2+) binding site. Glutamate 147 is an active-site residue. Zn(2+) is bound by residues histidine 150 and histidine 156. One can recognise a Disintegrin domain in the interval 214 to 299; that stretch reads PPVCGNYFVE…AECTDRFQRN (86 aa). Ca(2+)-binding residues include valine 216, asparagine 219, phenylalanine 221, glutamate 223, glutamate 226, and aspartate 229. Disulfide bonds link cysteine 217–cysteine 246, cysteine 228–cysteine 241, cysteine 230–cysteine 236, cysteine 240–cysteine 263, cysteine 254–cysteine 260, cysteine 259–cysteine 285, cysteine 272–cysteine 292, cysteine 279–cysteine 310, cysteine 303–cysteine 315, cysteine 322–cysteine 372, cysteine 337–cysteine 383, cysteine 350–cysteine 360, cysteine 367–cysteine 409, and cysteine 403–cysteine 414. Residues 278 to 280 carry the D/ECD-tripeptide motif; the sequence is ECD. Ca(2+) is bound by residues aspartate 280, methionine 281, aspartate 283, aspartate 294, and arginine 295. A glycan (N-linked (GlcNAc...) asparagine) is linked at asparagine 312.

The protein belongs to the venom metalloproteinase (M12B) family. P-III subfamily. P-IIIc sub-subfamily. Homodimer; disulfide-linked. Zn(2+) serves as cofactor. As to expression, expressed by the venom gland.

The protein localises to the secreted. Snake venom zinc metalloprotease that induces apoptosis in vascular endothelial cells (VEC), without degrading the extracellular matrix (it cannot cleave collagen) or inhibiting adhesion of VEC. Has also fibrinogenolytic and hemorrhagic activities. The chain is Zinc metalloproteinase-disintegrin-like lachestatin-2 from Lachesis muta rhombeata (Bushmaster).